The chain runs to 335 residues: Zinc finger protein 396 (335 aa).

An SCAN box domain is found at 52-134 (RQQFRQFGYQ…TMLEDVEREL (83 aa)). C2H2-type zinc fingers lie at residues 251–273 (QKCDECGKIFSQSSALILHQRIH), 279–301 (YACDECAKAFSRSAILIQHRRTH), and 307–329 (YKCHDCGKAFSQSSNLFRHRKRH).

Belongs to the krueppel C2H2-type zinc-finger protein family. Isoforms 1 and 2 can both homo- and hetero-associate. As to expression, expressed strongly in liver, moderately in skeletal muscle and weakly in kidney, pancreas, spleen and prostate.

Its subcellular location is the nucleus. It localises to the cytoplasm. In terms of biological role, isoform 1 and isoform 2 act as DNA-dependent transcriptional repressors. This is Zinc finger protein 396 (ZNF396) from Homo sapiens (Human).